The chain runs to 244 residues: 1-(5-phosphoribosyl)-5-[(5-phosphoribosylamino)methylideneamino] imidazole-4-carboxamide isomerase (244 aa).

The active-site Proton acceptor is the Asp-8. The Proton donor role is filled by Asp-129.

This sequence belongs to the HisA/HisF family.

It is found in the cytoplasm. It catalyses the reaction 1-(5-phospho-beta-D-ribosyl)-5-[(5-phospho-beta-D-ribosylamino)methylideneamino]imidazole-4-carboxamide = 5-[(5-phospho-1-deoxy-D-ribulos-1-ylimino)methylamino]-1-(5-phospho-beta-D-ribosyl)imidazole-4-carboxamide. The protein operates within amino-acid biosynthesis; L-histidine biosynthesis; L-histidine from 5-phospho-alpha-D-ribose 1-diphosphate: step 4/9. The protein is 1-(5-phosphoribosyl)-5-[(5-phosphoribosylamino)methylideneamino] imidazole-4-carboxamide isomerase of Maricaulis maris (strain MCS10) (Caulobacter maris).